Reading from the N-terminus, the 291-residue chain is 4-diphosphocytidyl-2-C-methyl-D-erythritol kinase (291 aa).

Residue lysine 8 is part of the active site. Residue 89 to 99 (PIGAGVGGGSS) participates in ATP binding. The active site involves aspartate 131.

The protein belongs to the GHMP kinase family. IspE subfamily.

The enzyme catalyses 4-CDP-2-C-methyl-D-erythritol + ATP = 4-CDP-2-C-methyl-D-erythritol 2-phosphate + ADP + H(+). Its pathway is isoprenoid biosynthesis; isopentenyl diphosphate biosynthesis via DXP pathway; isopentenyl diphosphate from 1-deoxy-D-xylulose 5-phosphate: step 3/6. In terms of biological role, catalyzes the phosphorylation of the position 2 hydroxy group of 4-diphosphocytidyl-2C-methyl-D-erythritol. This Chlamydia caviae (strain ATCC VR-813 / DSM 19441 / 03DC25 / GPIC) (Chlamydophila caviae) protein is 4-diphosphocytidyl-2-C-methyl-D-erythritol kinase.